Consider the following 486-residue polypeptide: Nucleolar GTP-binding protein 2 (486 aa).

The segment at 1 to 20 is disordered; the sequence is MGTGKKEKSRRIREGDTKDG. Ser-60, Ser-85, and Ser-155 each carry phosphoserine. In terms of domain architecture, CP-type G spans 212-373; the sequence is WNELYKVIDS…LIDCPGIVPP (162 aa). GTP-binding positions include 322 to 329 and 366 to 370; these read GYPNTGKS and DCPGI.

The protein belongs to the TRAFAC class YlqF/YawG GTPase family. NOG2 subfamily.

The protein localises to the nucleus. Its subcellular location is the nucleolus. Its function is as follows. GTPase that associates with pre-60S ribosomal subunits in the nucleolus and is required for their nuclear export and maturation. In Saccharomyces cerevisiae (strain ATCC 204508 / S288c) (Baker's yeast), this protein is Nucleolar GTP-binding protein 2 (NOG2).